The following is a 190-amino-acid chain: ATP synthase subunit delta (190 aa).

Belongs to the ATPase delta chain family. As to quaternary structure, F-type ATPases have 2 components, F(1) - the catalytic core - and F(0) - the membrane proton channel. F(1) has five subunits: alpha(3), beta(3), gamma(1), delta(1), epsilon(1). F(0) has three main subunits: a(1), b(2) and c(10-14). The alpha and beta chains form an alternating ring which encloses part of the gamma chain. F(1) is attached to F(0) by a central stalk formed by the gamma and epsilon chains, while a peripheral stalk is formed by the delta and b chains.

The protein localises to the cell inner membrane. F(1)F(0) ATP synthase produces ATP from ADP in the presence of a proton or sodium gradient. F-type ATPases consist of two structural domains, F(1) containing the extramembraneous catalytic core and F(0) containing the membrane proton channel, linked together by a central stalk and a peripheral stalk. During catalysis, ATP synthesis in the catalytic domain of F(1) is coupled via a rotary mechanism of the central stalk subunits to proton translocation. Functionally, this protein is part of the stalk that links CF(0) to CF(1). It either transmits conformational changes from CF(0) to CF(1) or is implicated in proton conduction. This chain is ATP synthase subunit delta, found in Anaplasma marginale (strain Florida).